The following is a 130-amino-acid chain: Small ribosomal subunit protein uS9 (130 aa).

It belongs to the universal ribosomal protein uS9 family.

This chain is Small ribosomal subunit protein uS9, found in Salmonella paratyphi A (strain AKU_12601).